Here is a 1351-residue protein sequence, read N- to C-terminus: MKELYSLFMKPKDPLHFNAVKIMISSPERIREWSYGEVKKPETINYRTFKPERDGLFCARIFGPIKDYECNCGKYKRMKHRGVVCEKCGVEVIQSKVRRERMGHIELASPVAHIWFLRSLPSKIGNLLDLTLRELEKVLYFDSYIVLDPGDTPLTKGELLTEEKYRQMVQEHGSGFVAGIGAESIKQLLAGLDLEKLAVELREEMSKTNSMAKRKKLAKRLKIIDAFRESENRPEWMIMDVIPVLPPDLRPLVPLDGGRFATSDLNDLYRRVINRNNRLKRLQELNAPDIIIRNEKRMLQEAVDVLFDNGRRGKTITGASKRPLKSLSDMLKGKQGRFRQNLLGKRVDYSGRTVIVIGPNLRLHQCGLPKKMALELFKPFIYNKLEEKGYVTTIKAAKKMVERETPEVWDTLDEVVREFPVMLNRAPTLHRLGIQAFEPILIEGKAIQLHPLVCTAFNADFDGDQMAVHVPLSIEAQAEARILMMSTNNILSPAHGDPIIVPSQDIVLGIYYMTREKPFAKGEDRVFSSREEVRCAFDAGEADLHARVHVRMGDERVKTTVGRVLLSEILPEEMPFSAVNRVMNKKVLAGLIDMCYRTAGIKATVLLADRLKDLGYEYATRSGLSISIKDMTIPHRKSEILDQAFDLVKEIERQYNEGLITEGEKYNKAVDIWAKATEDVAAEMMKEIATTEVGGPEGEARVVEAFNPIFMMADSGARGSKDQMRQLAGMRGLMAKPSGEIIETPITANFREGLTVLQYFISTHGARKGLADTALKTANSGYLTRRLVDVSQDVIISEPDCGTMDGIEVEALLEAGEIIQRLGDRILGRIAQEDILDPVTAEVLVPMGTEIDEQRVQLIEDAGIEKVNIRSALTCRSLRGVCTMCYGRDLAQGKLAQIGEAIGIIAAQSIGEPGTQLTMRTFHIGGTASKSIERTSINNRYAGTVRFLNLNTVHNRDGDLIAMNRNGEISIISESGRERERYVIIYGAKLKVTDGQPVEPDTLLAEWDPFTTPILTEVAGAAKFGDIVEGQTMQEKLDPVTGKSSKVVVEYRESDVRPRISIKDDKGKTARVGEGGFARYFMPVGAILMVNEGDAIFPGDVLARIPRETTKTKDITGGLPRVAELFEVRKPKEHAVITEIDGVIGFGKDTKGKRKVIVSPEVGDARDYLIPKGKHISVHEGDYVRAGEPLMDGSPNPHDILTVLGEKEVAKYLVDEVQQVYRLQGVKINDKHIEVIVRQMLKRVRITDPGDSEFLMGEHVEKPIFEEINSKLTEEDKRPAAAEPLLLGITKASLSTQSFISAASFQETTKVLTDAATAGKVDYLLGLKENVIMGRLIPAGSGLRTYREVRK.

Cys-70, Cys-72, Cys-85, and Cys-88 together coordinate Zn(2+). The Mg(2+) site is built by Asp-460, Asp-462, and Asp-464. 4 residues coordinate Zn(2+): Cys-801, Cys-875, Cys-882, and Cys-885.

The protein belongs to the RNA polymerase beta' chain family. In terms of assembly, the RNAP catalytic core consists of 2 alpha, 1 beta, 1 beta' and 1 omega subunit. When a sigma factor is associated with the core the holoenzyme is formed, which can initiate transcription. It depends on Mg(2+) as a cofactor. Zn(2+) is required as a cofactor.

It carries out the reaction RNA(n) + a ribonucleoside 5'-triphosphate = RNA(n+1) + diphosphate. Its function is as follows. DNA-dependent RNA polymerase catalyzes the transcription of DNA into RNA using the four ribonucleoside triphosphates as substrates. The protein is DNA-directed RNA polymerase subunit beta' of Syntrophobacter fumaroxidans (strain DSM 10017 / MPOB).